The following is a 392-amino-acid chain: Galactokinase (392 aa).

Glutamate 33–aspartate 36 contacts substrate. Residues serine 67 and glycine 129–serine 135 each bind ATP. 2 residues coordinate Mg(2+): serine 135 and glutamate 167. The active-site Proton acceptor is aspartate 179. Tyrosine 229 serves as a coordination point for substrate.

The protein belongs to the GHMP kinase family. GalK subfamily.

The protein resides in the cytoplasm. It carries out the reaction alpha-D-galactose + ATP = alpha-D-galactose 1-phosphate + ADP + H(+). Its pathway is carbohydrate metabolism; galactose metabolism. Functionally, catalyzes the transfer of the gamma-phosphate of ATP to D-galactose to form alpha-D-galactose-1-phosphate (Gal-1-P). The protein is Galactokinase of Limosilactobacillus reuteri (strain DSM 20016) (Lactobacillus reuteri).